A 431-amino-acid polypeptide reads, in one-letter code: uncharacterized protein (431 aa).

12 consecutive transmembrane segments (helical) span residues 33-53, 63-83, 111-131, 143-163, 175-195, 197-217, 241-261, 273-293, 318-338, 358-378, 381-401, and 407-427; these read VARVGTAAAVTALCGYAVIYL, FSVFGVFWGAFGLVTGAANGL, VSGMVGLGSLVVIAGSSPLWS, VALLSIGLAGFCLHATLLGML, LMVADAVIRVVVAAATFVIGW, LVGFIWATVAGSVAWLIMLMT, AHSIIAAGASAILVMGFPVLL, GVVILAVTLTRAPLLVPLTAM, LIGGVGAVGMLAAGVVGPWIM, AAAVAIAMLTLTGAAAVAAAL, AYSLGWVGATVGSGLLLLLPL, and TVVALLCGPLVGIGVHLVALA.

The protein to M.tuberculosis Rv1510 and M.bovis Mb3654.

Its subcellular location is the cell membrane. This is an uncharacterized protein from Mycobacterium tuberculosis (strain ATCC 25618 / H37Rv).